The following is a 64-amino-acid chain: Temporin-ALe (64 aa).

A signal peptide spans 1 to 22 (MFTLKKSLLLLFFLGTINLSLC). The propeptide occupies 23 to 47 (EQERNAEEERRDEPDERNAEVEKRF). A Leucine amide modification is found at Leu62.

In terms of tissue distribution, expressed by the skin glands.

It localises to the secreted. In terms of biological role, antimicrobial peptide with activity against Gram-positive and Gram-negative bacteria and against fungi. Has been tested against S.aureus (MIC=1.25 ug/mL), B.pumilus (MIC=5.0 ug/mL), B.cereus (MIC=15.0 ug/mL), E.coli (MIC=1.25 ug/mL), B.dysenteriae (MIC=5.0 ug/mL), A.cacoaceticus (MIC=15.0 ug/mL), P.aeruginosa (MIC=5.0 ug/mL) and C.albicans (MIC=1.25 ug/mL). Also shows a weak hemolytic activity. The chain is Temporin-ALe from Amolops loloensis (Lolokou Sucker Frog).